The chain runs to 435 residues: Aspartate--tRNA(Asp/Asn) ligase (435 aa).

Position 163 (Glu-163) interacts with L-aspartate. Residues 185-188 (QLYK) are aspartate. Arg-206 contributes to the L-aspartate binding site. ATP-binding positions include 206–208 (RAE), 214–216 (RHL), and Glu-358. 2 residues coordinate L-aspartate: Ser-361 and Arg-365. 406 to 409 (GAER) is an ATP binding site.

This sequence belongs to the class-II aminoacyl-tRNA synthetase family. Type 2 subfamily. Homodimer.

It localises to the cytoplasm. The catalysed reaction is tRNA(Asx) + L-aspartate + ATP = L-aspartyl-tRNA(Asx) + AMP + diphosphate. Functionally, aspartyl-tRNA synthetase with relaxed tRNA specificity since it is able to aspartylate not only its cognate tRNA(Asp) but also tRNA(Asn). Reaction proceeds in two steps: L-aspartate is first activated by ATP to form Asp-AMP and then transferred to the acceptor end of tRNA(Asp/Asn). Is slightly more efficient at aminoacylating tRNA(Asn) over tRNA(Asp). The sequence is that of Aspartate--tRNA(Asp/Asn) ligase (aspS2) from Deinococcus radiodurans (strain ATCC 13939 / DSM 20539 / JCM 16871 / CCUG 27074 / LMG 4051 / NBRC 15346 / NCIMB 9279 / VKM B-1422 / R1).